Here is a 369-residue protein sequence, read N- to C-terminus: Peptide chain release factor 2 (369 aa).

Glutamine 251 bears the N5-methylglutamine mark.

This sequence belongs to the prokaryotic/mitochondrial release factor family. Methylated by PrmC. Methylation increases the termination efficiency of RF2.

The protein localises to the cytoplasm. Functionally, peptide chain release factor 2 directs the termination of translation in response to the peptide chain termination codons UGA and UAA. The sequence is that of Peptide chain release factor 2 (prfB) from Thermotoga maritima (strain ATCC 43589 / DSM 3109 / JCM 10099 / NBRC 100826 / MSB8).